Consider the following 302-residue polypeptide: Probable alpha-L-glutamate ligase (302 aa).

Residues 104-287 (LQLLSRKGVG…VAGLLIKFIE (184 aa)) form the ATP-grasp domain. ATP-binding positions include K141, 178 to 179 (EY), D187, and 211 to 213 (RSN). 3 residues coordinate Mg(2+): D248, E260, and N262. D248, E260, and N262 together coordinate Mn(2+).

This sequence belongs to the RimK family. The cofactor is Mg(2+). Requires Mn(2+) as cofactor.

This Alcanivorax borkumensis (strain ATCC 700651 / DSM 11573 / NCIMB 13689 / SK2) protein is Probable alpha-L-glutamate ligase.